Consider the following 152-residue polypeptide: MLP-like protein 165 (152 aa).

Belongs to the MLP family.

The chain is MLP-like protein 165 (MLP165) from Arabidopsis thaliana (Mouse-ear cress).